The primary structure comprises 202 residues: MRPEGVSRGRASSVSISMCPPPPNGARRASLGCAPPLNSRPVCCAPSSVSLSSSSSRRSMPSLGSSRSSSLPSTGSLRSITRDPERLPSRPPSYTAINPECLLERGAERPRAWTASVMTAPPSYSEALCQAPPAYELVPELSYHPTQDPRGVYSSRSDPHQTSRRRQNPICIFIIVVATMLLILGLLLTITLSSLTNGKKEK.

Disordered stretches follow at residues 1 to 32 (MRPE…ASLG) and 46 to 95 (PSSV…PSYT). The span at 47–79 (SSVSLSSSSSRRSMPSLGSSRSSSLPSTGSLRS) shows a compositional bias: low complexity.

This is an uncharacterized protein from Equus caballus (Horse).